Consider the following 260-residue polypeptide: UPF0246 protein APP7_0648 (260 aa).

The protein belongs to the UPF0246 family.

In Actinobacillus pleuropneumoniae serotype 7 (strain AP76), this protein is UPF0246 protein APP7_0648.